Consider the following 274-residue polypeptide: Ribosomal RNA small subunit methyltransferase A (274 aa).

Residues asparagine 20, leucine 22, glycine 47, glutamate 68, aspartate 90, and asparagine 110 each coordinate S-adenosyl-L-methionine.

This sequence belongs to the class I-like SAM-binding methyltransferase superfamily. rRNA adenine N(6)-methyltransferase family. RsmA subfamily.

The protein resides in the cytoplasm. It carries out the reaction adenosine(1518)/adenosine(1519) in 16S rRNA + 4 S-adenosyl-L-methionine = N(6)-dimethyladenosine(1518)/N(6)-dimethyladenosine(1519) in 16S rRNA + 4 S-adenosyl-L-homocysteine + 4 H(+). Its function is as follows. Specifically dimethylates two adjacent adenosines (A1518 and A1519) in the loop of a conserved hairpin near the 3'-end of 16S rRNA in the 30S particle. May play a critical role in biogenesis of 30S subunits. The sequence is that of Ribosomal RNA small subunit methyltransferase A from Chlorobaculum parvum (strain DSM 263 / NCIMB 8327) (Chlorobium vibrioforme subsp. thiosulfatophilum).